The chain runs to 277 residues: ATP synthase subunit delta (277 aa).

The protein belongs to the ATPase delta chain family. As to quaternary structure, F-type ATPases have 2 components, F(1) - the catalytic core - and F(0) - the membrane proton channel. F(1) has five subunits: alpha(3), beta(3), gamma(1), delta(1), epsilon(1). F(0) has three main subunits: a(1), b(2) and c(10-14). The alpha and beta chains form an alternating ring which encloses part of the gamma chain. F(1) is attached to F(0) by a central stalk formed by the gamma and epsilon chains, while a peripheral stalk is formed by the delta and b chains.

It localises to the cell membrane. F(1)F(0) ATP synthase produces ATP from ADP in the presence of a proton or sodium gradient. F-type ATPases consist of two structural domains, F(1) containing the extramembraneous catalytic core and F(0) containing the membrane proton channel, linked together by a central stalk and a peripheral stalk. During catalysis, ATP synthesis in the catalytic domain of F(1) is coupled via a rotary mechanism of the central stalk subunits to proton translocation. Functionally, this protein is part of the stalk that links CF(0) to CF(1). It either transmits conformational changes from CF(0) to CF(1) or is implicated in proton conduction. The chain is ATP synthase subunit delta from Frankia alni (strain DSM 45986 / CECT 9034 / ACN14a).